The sequence spans 330 residues: Thioredoxin domain-containing protein 6 (330 aa).

The Thioredoxin domain occupies 11–115 (QVNISTQELW…QKTILDQLEA (105 aa)). The NDK stretch occupies residues 157 to 303 (ERTCTLAIIK…LFPSLKFSDK (147 aa)). The segment at 300–330 (FSDKDTEAPQGGEAEATAGPTEALCFPEDVD) is disordered. A compositionally biased stretch (low complexity) spans 307-322 (APQGGEAEATAGPTEA).

It belongs to the NDK family. As to quaternary structure, monomer and homodimer. As to expression, detected at very low levels in testis, lung and brain.

It localises to the cytoplasm. It is found in the cytoskeleton. Its subcellular location is the cilium axoneme. The protein resides in the dynein axonemal particle. Functionally, may be a regulator of microtubule physiology. The chain is Thioredoxin domain-containing protein 6 from Homo sapiens (Human).